The following is a 459-amino-acid chain: Biphenyl dioxygenase subunit alpha (459 aa).

The 99-residue stretch at 58 to 156 folds into the Rieske domain; the sequence is WLLLGHESHV…KEGDCGFDKA (99 aa). [2Fe-2S] cluster contacts are provided by Cys-100, His-102, Cys-120, and His-123. Fe cation contacts are provided by His-233 and His-239.

The protein belongs to the bacterial ring-hydroxylating dioxygenase alpha subunit family. Heterohexamer consisting of three BphA subunits and three BphE subunits. A ferredoxin (BphF) and a ferredoxin reductase (BphG) must be present to obtain activity. [2Fe-2S] cluster serves as cofactor. It depends on Fe cation as a cofactor.

The catalysed reaction is biphenyl + NADH + O2 + H(+) = (2R,3S)-3-phenylcyclohexa-3,5-diene-1,2-diol + NAD(+). It functions in the pathway xenobiotic degradation; biphenyl degradation; 2-hydroxy-2,4-pentadienoate and benzoate from biphenyl: step 1/4. This is Biphenyl dioxygenase subunit alpha (bphA) from Paraburkholderia xenovorans (strain LB400).